A 124-amino-acid polypeptide reads, in one-letter code: Putative iron-sulfur cluster insertion protein ErpA (124 aa).

Iron-sulfur cluster contacts are provided by cysteine 52, cysteine 116, and cysteine 118.

The protein belongs to the HesB/IscA family. In terms of assembly, homodimer. The cofactor is iron-sulfur cluster.

Functionally, required for insertion of 4Fe-4S clusters. The protein is Putative iron-sulfur cluster insertion protein ErpA of Ralstonia nicotianae (strain ATCC BAA-1114 / GMI1000) (Ralstonia solanacearum).